A 348-amino-acid chain; its full sequence is Dihydroorotase (348 aa).

Zn(2+)-binding residues include H17 and H19. Substrate contacts are provided by residues 19–21 (HLR) and N45. Residues K103, H140, and H178 each contribute to the Zn(2+) site. K103 bears the N6-carboxylysine mark. H140 provides a ligand contact to substrate. L223 contributes to the substrate binding site. D251 is a binding site for Zn(2+). D251 is an active-site residue. Positions 255 and 267 each coordinate substrate.

It belongs to the metallo-dependent hydrolases superfamily. DHOase family. Class II DHOase subfamily. As to quaternary structure, homodimer. Requires Zn(2+) as cofactor.

The catalysed reaction is (S)-dihydroorotate + H2O = N-carbamoyl-L-aspartate + H(+). Its pathway is pyrimidine metabolism; UMP biosynthesis via de novo pathway; (S)-dihydroorotate from bicarbonate: step 3/3. Catalyzes the reversible cyclization of carbamoyl aspartate to dihydroorotate. The sequence is that of Dihydroorotase from Escherichia coli O139:H28 (strain E24377A / ETEC).